Reading from the N-terminus, the 112-residue chain is Prothymosin alpha (112 aa).

Methionine 1 carries the post-translational modification N-acetylmethionine. Positions 1 to 112 are disordered; that stretch reads MSDAAVDTSS…KKQKKTDEDD (112 aa). An N-acetylserine; in Prothymosin alpha, N-terminally processed modification is found at serine 2. Serine 2 carries the post-translational modification Phosphoserine. Threonine 8 is subject to Phosphothreonine. Phosphoserine occurs at positions 9 and 10. Phosphothreonine occurs at positions 13 and 14. The span at 13–31 shows a compositional bias: basic and acidic residues; sequence TTKDLKEKKEVVEEAENGR. N6-acetyllysine; alternate is present on lysine 15. N6-succinyllysine; alternate is present on lysine 15. Residues 43 to 84 are compositionally biased toward acidic residues; the sequence is ENGEQEADNEVDEEEEEGGEEEEEEEEGDGEEEDGDEDEEAE. Residues 101–112 are compositionally biased toward basic and acidic residues; it reads ETKKQKKTDEDD. Threonine 102 bears the Phosphothreonine mark. Lysine 103 is modified (N6-acetyllysine; alternate). Lysine 103 is covalently cross-linked (Glycyl lysine isopeptide (Lys-Gly) (interchain with G-Cter in SUMO2); alternate). A Phosphothreonine modification is found at threonine 108.

This sequence belongs to the pro/parathymosin family. In terms of assembly, interacts with NUPR1; regulates apoptotic process. Covalently linked to a small RNA of about 20 nucleotides.

It localises to the nucleus. In terms of biological role, prothymosin alpha may mediate immune function by conferring resistance to certain opportunistic infections. The sequence is that of Prothymosin alpha (Ptma) from Rattus norvegicus (Rat).